A 582-amino-acid chain; its full sequence is Formate--tetrahydrofolate ligase (582 aa).

Threonine 65 to threonine 72 is a binding site for ATP.

The protein belongs to the formate--tetrahydrofolate ligase family.

The catalysed reaction is (6S)-5,6,7,8-tetrahydrofolate + formate + ATP = (6R)-10-formyltetrahydrofolate + ADP + phosphate. Its pathway is one-carbon metabolism; tetrahydrofolate interconversion. The chain is Formate--tetrahydrofolate ligase from Vibrio atlanticus (strain LGP32) (Vibrio splendidus (strain Mel32)).